The following is an 888-amino-acid chain: MRTFYPSDSCKESQLDSLNPQSWLQVERGKLSSSASSSAPLCRESFIKVPEPQILPHYKPLDYVEVLAQIHEELDTCPLQERSILYLLQYQVFRGLGETKLRRRSLQSAWQEATTVHEKVVFGSWLRYEKQGEEVITDLLSSCGKYSEEFVPLDIASYFPATTASSPEAASVKTNRSVSKNVVFKIGEEKIACQRRKIASLSAPFHAMLYGNFTESLLDEIDMSENHVSSSAMRVVRDFSVVGVLIGVSKNLLLEVLVFANKFCCERLKDACDRELASLISSMECAIELMDFALEENSPILASSCLQVFLYEMPDSLNDERVVEVLTRVNRSQVSTMAGKAPFSLYSCLSEVSMCIDPRSDRTLGFLEKLVDFAENDRQQVLGFHRLGCMRLLRKEYREAEEAFETAFNLGHVYSATGLARLGYIQGHRLWAYEKLSSVISSVSPPLGWMYQERSFYCEGDKKLEDLEKATELDPTLTYPYMYRAVTRMSKQNAKAALEEINRILGFKLALECLEIRFCLYLGMDDYEAALRDIQAALTLCPDYRMFDGKVAGRQLQTLVYEHVENWTTADCWMQLYEKWSNVDDIGSLSVIYQMLESDACKGVLYFRQSLLLLRLNCPEAAMRSLQLAREHASSDHERLVYEGWILYDTGHCEEGLQKAKESIGIKRSFEAYFLQAYALAESSLDPSSSSTVVSLLEDALKCPSDRLRKGQALNNLGSVYVDCEKLDLAADCYINALKVRHTRAHQGLARVHFLRNDKAAAYEEMTRLIEKAQNNASAYEKRSEYCDRELAKSDLEMVTRLDPLRVYPYRYRAAVLMDSRKEREAITELSRAIAFKADLHLLHLRAAFHEHIGDVTSALRDCRAALSVDPNHQEMLELHSRVNSHEP.

One can recognise a BTB domain in the interval 180-280 (KNVVFKIGEE…ACDRELASLI (101 aa)). TPR repeat units follow at residues 381 to 414 (VLGFHRLGCMRLLRKEYREAEEAFETAFNLGHVY), 441 to 477 (SSVSPPLGWMYQERSFYCEGDKKLEDLEKATELDPTL), 511 to 544 (LECLEIRFCLYLGMDDYEAALRDIQAALTLCPDY), 637 to 670 (HERLVYEGWILYDTGHCEEGLQKAKESIGIKRSF), and 711 to 744 (GQALNNLGSVYVDCEKLDLAADCYINALKVRHTR). Positions 755–793 (LRNDKAAAYEEMTRLIEKAQNNASAYEKRSEYCDRELAK) form a coiled coil. TPR repeat units follow at residues 807–840 (VYPYRYRAAVLMDSRKEREAITELSRAIAFKADL) and 842–873 (LLHLRAAFHEHIGDVTSALRDCRAALSVDPNH).

Belongs to the ETO1 family. As to quaternary structure, interacts with the C-terminal domain of ACS4, ACS5 and ACS9. Predominantly expressed in flowers.

It participates in protein modification; protein ubiquitination. In terms of biological role, possible regulator of the ethylene pathway, which acts by regulating the stability of 1-aminocyclopropane-1-carboxylate synthase (ACS) enzymes. May act as a substrate-specific adapter that connects ACS enzymes, such as ACS5, to ubiquitin ligase complexes, leading to proteasomal degradation of ACS enzymes. This Arabidopsis thaliana (Mouse-ear cress) protein is ETO1-like protein 1 (EOL1).